A 661-amino-acid chain; its full sequence is Ubiquitin carboxyl-terminal hydrolase 25 (661 aa).

Positions 24–335 (LGLRNLGNTC…KAYILFFSRS (312 aa)) constitute a USP domain. C33 (nucleophile) is an active-site residue. H294 acts as the Proton acceptor in catalysis. 2 disordered regions span residues 387–406 (GNLA…RAEQ) and 449–558 (FHQD…LCSS). The segment covering 449–461 (FHQDENIAPKANK) has biased composition (basic and acidic residues). Polar residues-rich tracts occupy residues 462–475 (ENSV…VNSG) and 545–558 (NGVS…LCSS).

This sequence belongs to the peptidase C19 family.

The enzyme catalyses Thiol-dependent hydrolysis of ester, thioester, amide, peptide and isopeptide bonds formed by the C-terminal Gly of ubiquitin (a 76-residue protein attached to proteins as an intracellular targeting signal).. In terms of biological role, recognizes and hydrolyzes the peptide bond at the C-terminal Gly of ubiquitin. Involved in the processing of poly-ubiquitin precursors as well as that of ubiquitinated proteins. The sequence is that of Ubiquitin carboxyl-terminal hydrolase 25 (UBP25) from Arabidopsis thaliana (Mouse-ear cress).